Consider the following 359-residue polypeptide: Type-1 angiotensin II receptor (359 aa).

Residues 1–25 lie on the Extracellular side of the membrane; sequence MILNSSTEDSIKRIQDDCPKAGRHN. Residue Asn-4 is glycosylated (N-linked (GlcNAc...) asparagine). Positions 15 and 17 each coordinate angiotensin II. 2 disulfide bridges follow: Cys-18-Cys-274 and Cys-101-Cys-180. Residues 26-55 form a helical membrane-spanning segment; the sequence is YIFVMIPTLYSIIFVVGIFGNSLVVIVIYF. Residues 56–61 are Cytoplasmic-facing; the sequence is YMKLKT. The helical transmembrane segment at 62-89 threads the bilayer; it reads VASVFLLNLALADLCFLLTLPLWAVYTA. Residues 90-98 are Extracellular-facing; that stretch reads MEYRWPFGN. The helical transmembrane segment at 99-125 threads the bilayer; it reads YLCKIASASVSFNLYASVFLLTCLSID. The Cytoplasmic portion of the chain corresponds to 126 to 141; it reads RYLAIVHPMKSRLRRT. A helical transmembrane segment spans residues 142-165; that stretch reads MLVAKVTCIIIWLLAGLASLPTII. Topologically, residues 166 to 190 are extracellular; the sequence is HRNVFFIENTNITVCAFHYESQNST. Arg-167 is an angiotensin II binding site. A glycan (N-linked (GlcNAc...) asparagine) is linked at Asn-176. Angiotensin II-binding residues include Phe-182, His-183, and Tyr-184. N-linked (GlcNAc...) asparagine glycosylation is present at Asn-188. The helical transmembrane segment at 191–216 threads the bilayer; the sequence is LPVGLGLTKNILGFLFPFLIILTSYT. Lys-199 contacts angiotensin II. Residues 217–239 are Cytoplasmic-facing; it reads LIWKALKKAYEIQKNKPRNDDIF. A helical transmembrane segment spans residues 240 to 268; it reads KIIMAIVLFFFFSWVPHQIFTFLDVLIQL. At 269–278 the chain is on the extracellular side; the sequence is GIIHDCKIAD. Residues 279 to 304 traverse the membrane as a helical segment; the sequence is IVDTAMPITICLAYFNNCLNPLFYGF. Topologically, residues 305 to 359 are cytoplasmic; sequence LGKKFKKYFLQLLKYIPPKAKSHSSLSTKMSTLSYRPSENGSSSTKKSAPCTEVE. The disordered stretch occupies residues 326–359; it reads SHSSLSTKMSTLSYRPSENGSSSTKKSAPCTEVE. Positions 327–351 are enriched in polar residues; sequence HSSLSTKMSTLSYRPSENGSSSTKK. Cys-355 carries the S-palmitoyl cysteine lipid modification.

It belongs to the G-protein coupled receptor 1 family. In terms of assembly, interacts with MAS1. Interacts with ARRB1. Interacts with FLNA (via filamin repeat 21); increases PKA-mediated phosphorylation of FLNA. C-terminal Ser or Thr residues may be phosphorylated.

Its subcellular location is the cell membrane. Functionally, receptor for angiotensin II, a vasoconstricting peptide, which acts as a key regulator of blood pressure and sodium retention by the kidney. The activated receptor in turn couples to G-alpha proteins G(q) (GNAQ, GNA11, GNA14 or GNA15) and thus activates phospholipase C and increases the cytosolic Ca(2+) concentrations, which in turn triggers cellular responses such as stimulation of protein kinase C. This chain is Type-1 angiotensin II receptor (AGTR1), found in Sus scrofa (Pig).